Consider the following 249-residue polypeptide: Diaminopimelate epimerase (249 aa).

2 residues coordinate substrate: N11 and N60. The active-site Proton donor is C69. Substrate is bound by residues 70–71 (GN), N164, and 182–183 (ER). C192 (proton acceptor) is an active-site residue. Residue 193–194 (GT) coordinates substrate.

Belongs to the diaminopimelate epimerase family. As to quaternary structure, homodimer.

The protein localises to the cytoplasm. It catalyses the reaction (2S,6S)-2,6-diaminopimelate = meso-2,6-diaminopimelate. It participates in amino-acid biosynthesis; L-lysine biosynthesis via DAP pathway; DL-2,6-diaminopimelate from LL-2,6-diaminopimelate: step 1/1. In terms of biological role, catalyzes the stereoinversion of LL-2,6-diaminopimelate (L,L-DAP) to meso-diaminopimelate (meso-DAP), a precursor of L-lysine and an essential component of the bacterial peptidoglycan. In Campylobacter jejuni subsp. jejuni serotype O:2 (strain ATCC 700819 / NCTC 11168), this protein is Diaminopimelate epimerase.